Here is a 376-residue protein sequence, read N- to C-terminus: tRNA(Met) cytidine acetate ligase (376 aa).

ATP is bound by residues 7-20, G102, N160, and R181; that span reads IAEY…HYYQ.

This sequence belongs to the TmcAL family.

Its subcellular location is the cytoplasm. It carries out the reaction cytidine(34) in elongator tRNA(Met) + acetate + ATP = N(4)-acetylcytidine(34) in elongator tRNA(Met) + AMP + diphosphate. Functionally, catalyzes the formation of N(4)-acetylcytidine (ac(4)C) at the wobble position of elongator tRNA(Met), using acetate and ATP as substrates. First activates an acetate ion to form acetyladenylate (Ac-AMP) and then transfers the acetyl group to tRNA to form ac(4)C34. The protein is tRNA(Met) cytidine acetate ligase of Exiguobacterium sp. (strain ATCC BAA-1283 / AT1b).